The primary structure comprises 101 residues: Small ribosomal subunit protein uS14 (101 aa).

It belongs to the universal ribosomal protein uS14 family. As to quaternary structure, part of the 30S ribosomal subunit. Contacts proteins S3 and S10.

Binds 16S rRNA, required for the assembly of 30S particles and may also be responsible for determining the conformation of the 16S rRNA at the A site. The protein is Small ribosomal subunit protein uS14 of Salmonella paratyphi A (strain ATCC 9150 / SARB42).